Consider the following 101-residue polypeptide: Urease subunit beta (101 aa).

Belongs to the urease beta subunit family. In terms of assembly, heterotrimer of UreA (gamma), UreB (beta) and UreC (alpha) subunits. Three heterotrimers associate to form the active enzyme.

The protein resides in the cytoplasm. It carries out the reaction urea + 2 H2O + H(+) = hydrogencarbonate + 2 NH4(+). Its pathway is nitrogen metabolism; urea degradation; CO(2) and NH(3) from urea (urease route): step 1/1. This is Urease subunit beta from Ruegeria sp. (strain TM1040) (Silicibacter sp.).